Consider the following 217-residue polypeptide: MSNSGHPKDRGNRRGLMLVLSSPSGAGKTTLSRMLLEEFGDVKLSISATTRPPRPNEVHGEDYYFKTPDEFHRMIERREFLEWAHVFDKHYGTPKADTVARLEAGEDVLFDVDWQGADALHDQMPNDVVSVFILPPSIEALQARLMGRPGSTPELVARRMEDAKREIMHWRRYDYVIVNDDLNVAYQRLKRILLVERLKRLRQIDLEDHVRALLGEA.

A Guanylate kinase-like domain is found at Gly15–Leu194. ATP is bound at residue Ser22–Thr29.

It belongs to the guanylate kinase family.

The protein resides in the cytoplasm. The enzyme catalyses GMP + ATP = GDP + ADP. In terms of biological role, essential for recycling GMP and indirectly, cGMP. This Hyphomonas neptunium (strain ATCC 15444) protein is Guanylate kinase.